The chain runs to 536 residues: L-aspartate oxidase 2 (536 aa).

FAD-binding positions include 22-25 and 51-58; these read EGLA and SSYWAQGG. Residue arginine 284 is the Proton donor/acceptor of the active site. Residues glutamate 369 and 385-386 contribute to the FAD site; that span reads SL.

Belongs to the FAD-dependent oxidoreductase 2 family. NadB subfamily. Requires FAD as cofactor.

Its subcellular location is the cytoplasm. It catalyses the reaction L-aspartate + O2 = iminosuccinate + H2O2. It functions in the pathway cofactor biosynthesis; NAD(+) biosynthesis; iminoaspartate from L-aspartate (oxidase route): step 1/1. In terms of biological role, catalyzes the oxidation of L-aspartate to iminoaspartate, the first step in the de novo biosynthesis of NAD(+). The polypeptide is L-aspartate oxidase 2 (nadB2) (Ralstonia nicotianae (strain ATCC BAA-1114 / GMI1000) (Ralstonia solanacearum)).